The following is an 866-amino-acid chain: Probable outer membrane usher protein ElfC (866 aa).

A signal peptide spans 1–35 (MYRTHRQHSLLSSGGVPSFIGGLVVFVSAAFNAQA).

It belongs to the fimbrial export usher family.

The protein resides in the cell outer membrane. Part of the elfADCG-ycbUVF fimbrial operon, which promotes adhesion of bacteria to different abiotic surfaces. Could be involved in the export and assembly of the ElfA fimbrial subunits across the outer membrane. The protein is Probable outer membrane usher protein ElfC (elfC) of Escherichia coli (strain K12).